A 951-amino-acid chain; its full sequence is Pentatricopeptide repeat-containing protein At4g19220, mitochondrial (951 aa).

The N-terminal 63 residues, 1-63 (MLLVMVRSST…RHFTSSVLSP (63 aa)), are a transit peptide targeting the mitochondrion. PPR repeat units lie at residues 121-151 (DLAT…LKEK), 152-186 (DVIV…GNEF), 187-221 (DSTT…GLVG), 222-252 (DSSL…MEHR), 253-287 (DIVS…GQEA), 288-322 (DTVT…GYSP), 325-355 (HVSV…LVCR), 356-386 (DVIS…MQSV), 392-426 (DIAT…EMQS), 428-458 (ALEV…TTHR), 459-489 (DLVS…VVSE), 496-530 (SLST…GFGD), 531-561 (NMLS…MSET), 563-597 (DLTS…GKIR), 599-629 (DLIT…AIKS), 634-668 (DTQL…NLCS), 669-695 (WNCV…LKLE), 697-731 (NEIT…GFQA), 732-762 (NPFV…SGVN), 763-793 (SISA…LSSN), 799-829 (NKSS…MEEK), and 835-865 (VTEH…IGEP). A type E motif region spans residues 870–945 (VWGALLSACN…LPGYSVIDVR (76 aa)).

The protein belongs to the PPR family. PCMP-E subfamily.

Its subcellular location is the mitochondrion. The chain is Pentatricopeptide repeat-containing protein At4g19220, mitochondrial (PCMP-E2) from Arabidopsis thaliana (Mouse-ear cress).